Here is a 134-residue protein sequence, read N- to C-terminus: Global transcriptional regulator Spx (134 aa).

Cys-10 and Cys-13 are joined by a disulfide.

It belongs to the ArsC family. Spx subfamily. Interacts with the C-terminal domain of the alpha subunit of the RNAP.

Its subcellular location is the cytoplasm. Global transcriptional regulator that plays a key role in stress response and exerts either positive or negative regulation of genes. Acts by interacting with the C-terminal domain of the alpha subunit of the RNA polymerase (RNAP). This interaction can enhance binding of RNAP to the promoter region of target genes and stimulate their transcription, or block interaction of RNAP with activator. In Streptococcus pyogenes serotype M1, this protein is Global transcriptional regulator Spx.